Here is a 142-residue protein sequence, read N- to C-terminus: Small ribosomal subunit protein bS6 (142 aa).

Over residues 113-136 the composition is skewed to basic and acidic residues; that stretch reads IKKEPREPREPRAPREPKAEKIEE. The disordered stretch occupies residues 113–142; that stretch reads IKKEPREPREPRAPREPKAEKIEEQTFSEE.

The protein belongs to the bacterial ribosomal protein bS6 family.

Functionally, binds together with bS18 to 16S ribosomal RNA. This is Small ribosomal subunit protein bS6 from Campylobacter curvus (strain 525.92).